Consider the following 504-residue polypeptide: MEEFQRYFELDRYQQHDFLYPLIFQEYIYALAHDHGLNRSIVLENPGYDNKSSLLIVKRLITRMYQQNHYIISSNDSNQNPFFGHNKNLYSQMISEGFVVIVEIPFSLRLRSSLEGKEIVKSQNLQSIHSIFPFLEDKFLHLNYVXDILIPYPIHLEILVQPLRHWVKDASSLHLLRFFLHEYRNWNSLITPKRPSAYFSKRNQRLFLFLYNSHVCEYESIFLLTQSSHLRSTSSGALLERIYFYGKLEHSVEVFAKDFQAILWLFKDPFIHYLRYQGKSILASKGTSLLMNKWKYYLLNCWQCHFYVWSQPRRIYINQLSNHSLDFLGYLSSVRLNPSMVRSQMIENSFLIDNAIKKFDTIVPIIPMIQSLAKAKFCNVLGHPISKPVWADLSDSDIIDRFGRICRNLSHYHSGSSKKKTLYRIKYILRLSCARTLARKHKSTVRAFLKRVGSELLEEFFTEEEQVLSLTFPRAFSTSTSRGLYRRRIWYLDIICINDLANHE.

It belongs to the intron maturase 2 family. MatK subfamily.

It localises to the plastid. The protein resides in the chloroplast. In terms of biological role, usually encoded in the trnK tRNA gene intron. Probably assists in splicing its own and other chloroplast group II introns. This Mentzelia laevicaulis (Blazing star) protein is Maturase K.